We begin with the raw amino-acid sequence, 388 residues long: Chorismate synthase (388 aa).

NADP(+) contacts are provided by Arg-39 and Arg-45. FMN is bound by residues 130 to 132 (RSS), 251 to 252 (NA), Gly-296, 311 to 315 (KPIPT), and Arg-337.

The protein belongs to the chorismate synthase family. As to quaternary structure, homotetramer. FMNH2 serves as cofactor.

It carries out the reaction 5-O-(1-carboxyvinyl)-3-phosphoshikimate = chorismate + phosphate. Its pathway is metabolic intermediate biosynthesis; chorismate biosynthesis; chorismate from D-erythrose 4-phosphate and phosphoenolpyruvate: step 7/7. Catalyzes the anti-1,4-elimination of the C-3 phosphate and the C-6 proR hydrogen from 5-enolpyruvylshikimate-3-phosphate (EPSP) to yield chorismate, which is the branch point compound that serves as the starting substrate for the three terminal pathways of aromatic amino acid biosynthesis. This reaction introduces a second double bond into the aromatic ring system. This is Chorismate synthase from Streptococcus pneumoniae (strain ATCC 700669 / Spain 23F-1).